The chain runs to 798 residues: Penicillin-binding protein 1A (798 aa).

At 1-9 the chain is on the cytoplasmic side; that stretch reads MIKKIVTTC. The helical; Signal-anchor for type II membrane protein transmembrane segment at 10–30 threads the bilayer; that stretch reads FGLVLGLCVFGVGLVAIAILV. The Periplasmic segment spans residues 31-798; it reads TYPKLPSLDS…SKQPQLDSLF (768 aa). The tract at residues 50–218 is transglycosylase; it reads LTIYSADGEV…SAYNPIVNPE (169 aa). The active-site Proton donor; for transglycosylase activity is the Glu-88. The transpeptidase stretch occupies residues 414–700; that stretch reads VVVQEPLLQA…GTIAVPVWVD (287 aa). Ser-461 acts as the Acyl-ester intermediate; for transpeptidase activity in catalysis. The tract at residues 751–798 is disordered; the sequence is SRRIREDKEAGAEDVERGAADEVRQEVQETPVLPSNTGSKQPQLDSLF. A compositionally biased stretch (basic and acidic residues) spans 753 to 777; it reads RIREDKEAGAEDVERGAADEVRQEV. A compositionally biased stretch (polar residues) spans 783–798; it reads LPSNTGSKQPQLDSLF.

The protein in the N-terminal section; belongs to the glycosyltransferase 51 family. In the C-terminal section; belongs to the transpeptidase family.

It localises to the cell inner membrane. The catalysed reaction is [GlcNAc-(1-&gt;4)-Mur2Ac(oyl-L-Ala-gamma-D-Glu-L-Lys-D-Ala-D-Ala)](n)-di-trans,octa-cis-undecaprenyl diphosphate + beta-D-GlcNAc-(1-&gt;4)-Mur2Ac(oyl-L-Ala-gamma-D-Glu-L-Lys-D-Ala-D-Ala)-di-trans,octa-cis-undecaprenyl diphosphate = [GlcNAc-(1-&gt;4)-Mur2Ac(oyl-L-Ala-gamma-D-Glu-L-Lys-D-Ala-D-Ala)](n+1)-di-trans,octa-cis-undecaprenyl diphosphate + di-trans,octa-cis-undecaprenyl diphosphate + H(+). The enzyme catalyses Preferential cleavage: (Ac)2-L-Lys-D-Ala-|-D-Ala. Also transpeptidation of peptidyl-alanyl moieties that are N-acyl substituents of D-alanine.. The protein operates within cell wall biogenesis; peptidoglycan biosynthesis. Cell wall formation. Synthesis of cross-linked peptidoglycan from the lipid intermediates. The enzyme has a penicillin-insensitive transglycosylase N-terminal domain (formation of linear glycan strands) and a penicillin-sensitive transpeptidase C-terminal domain (cross-linking of the peptide subunits). The chain is Penicillin-binding protein 1A (mrcA) from Neisseria cinerea.